Here is a 1021-residue protein sequence, read N- to C-terminus: Probable LRR receptor-like serine/threonine-protein kinase RFK1 (1021 aa).

The N-terminal stretch at 1–39 (MISLYQILAEKKKKKKNDLNIFAFSVFAIICFKFYSVNA) is a signal peptide. Residues 41-625 (KLPQQEVDAL…PKTGMSPGAY (585 aa)) lie on the Extracellular side of the membrane. The N-linked (GlcNAc...) asparagine glycan is linked to Asn96. 2 LRR repeats span residues 99 to 122 (DCHVVKFAFKDHNLPGTLPQIVKL) and 123 to 146 (PYLREIDLAYNYINGTLPREWASS). 3 N-linked (GlcNAc...) asparagine glycosylation sites follow: Asn136, Asn147, and Asn168. LRR repeat units lie at residues 148 to 168 (LTFISLLVNRLSGEIPKEFGN), 169 to 192 (SSLTYLDLESNAFSGTIPQELGNL), 193 to 216 (VHLKKLLLSSNKLTGTLPASLARL), 218 to 240 (NMTDFRINDLQLSGTIPSYIQNW), and 241 to 266 (KQLERLEMIASGLTGPIPSVISVLSN). N-linked (GlcNAc...) asparagine glycosylation occurs at Asn218. N-linked (GlcNAc...) asparagine glycans are attached at residues Asn287 and Asn300. LRR repeat units lie at residues 288–312 (VTGLTKIILKNCNISGQIPTYLSHL), 313–336 (KELETLDLSFNKLVGGIPSFAQAE), 338–359 (LRFIILAGNMLEGDAPDELLRD), and 361–381 (ITVDLSYNNLKWQSPESRACR). N-linked (GlcNAc...) asparagine glycans are attached at residues Asn486 and Asn512. The chain crosses the membrane as a helical span at residues 626-646 (IAIGIGAPCLIIFILGFLWIC). The Cytoplasmic segment spans residues 647 to 1021 (GCLPRCGRQR…QERKKEESRP (375 aa)). A Phosphothreonine modification is found at Thr670. The Protein kinase domain maps to 681 to 956 (FNPTNKIGEG…EVVAMLEGLY (276 aa)). ATP is bound by residues 687 to 695 (IGEGGFGAV) and Lys709. Tyr754 is subject to Phosphotyrosine. Asp807 (proton acceptor) is an active-site residue. The residue at position 840 (Ser840) is a Phosphoserine. Residues Thr841 and Thr846 each carry the phosphothreonine modification. Position 854 is a phosphotyrosine (Tyr854). The tract at residues 985–1021 (ENNSKTQCSVKSYPSSSSTSSGAGQAVQERKKEESRP) is disordered. Residues 993–1005 (SVKSYPSSSSTSS) show a composition bias toward low complexity. Residues 1012–1021 (QERKKEESRP) are compositionally biased toward basic and acidic residues.

It belongs to the protein kinase superfamily. Ser/Thr protein kinase family. Mostly expressed in flower buds, especially in stamens.

Its subcellular location is the membrane. The catalysed reaction is L-seryl-[protein] + ATP = O-phospho-L-seryl-[protein] + ADP + H(+). It carries out the reaction L-threonyl-[protein] + ATP = O-phospho-L-threonyl-[protein] + ADP + H(+). The polypeptide is Probable LRR receptor-like serine/threonine-protein kinase RFK1 (RKF1) (Arabidopsis thaliana (Mouse-ear cress)).